The following is a 291-amino-acid chain: MPSLKDLKNRISSVKNTRKITKAMQMVAAAKLRRAQEAAEDARPYAERFNAVMAGLAASVGQSDTAPKLLAGTGSDQVQLLVVMTAERGLCGGFNANIAKLARQKVLDLQAAGKTVKILTVGKKGRDVLKREFGDLFVGHVDLTEVKRVGYVDAQGIAKDILARFDAGEFDVATIFYSKFQNVVTQIPTAQQIIPAEFDAEGAEATSGVVDYEPSEEAILADLLPRGVATQIFAGLLENGASEQGARMSAMDNATRNAGEMIDKLTIEYNRSRQAVITNELIEIISGAEAL.

Belongs to the ATPase gamma chain family. As to quaternary structure, F-type ATPases have 2 components, CF(1) - the catalytic core - and CF(0) - the membrane proton channel. CF(1) has five subunits: alpha(3), beta(3), gamma(1), delta(1), epsilon(1). CF(0) has three main subunits: a, b and c.

It localises to the cell inner membrane. Produces ATP from ADP in the presence of a proton gradient across the membrane. The gamma chain is believed to be important in regulating ATPase activity and the flow of protons through the CF(0) complex. In Ruegeria sp. (strain TM1040) (Silicibacter sp.), this protein is ATP synthase gamma chain.